Consider the following 277-residue polypeptide: Putative phosphoenolpyruvate synthase regulatory protein (277 aa).

Glycine 157–threonine 164 serves as a coordination point for ADP.

The protein belongs to the pyruvate, phosphate/water dikinase regulatory protein family. PSRP subfamily.

The enzyme catalyses [pyruvate, water dikinase] + ADP = [pyruvate, water dikinase]-phosphate + AMP + H(+). It carries out the reaction [pyruvate, water dikinase]-phosphate + phosphate + H(+) = [pyruvate, water dikinase] + diphosphate. Bifunctional serine/threonine kinase and phosphorylase involved in the regulation of the phosphoenolpyruvate synthase (PEPS) by catalyzing its phosphorylation/dephosphorylation. The protein is Putative phosphoenolpyruvate synthase regulatory protein of Aromatoleum aromaticum (strain DSM 19018 / LMG 30748 / EbN1) (Azoarcus sp. (strain EbN1)).